The following is a 372-amino-acid chain: Chaperone protein DnaJ (372 aa).

Positions 3-68 (NLYEILEVNE…EKRKKYDMYG (66 aa)) constitute a J domain. The segment at 130–212 (GTKKEISYKK…CKGKGYEIER (83 aa)) adopts a CR-type zinc-finger fold. Zn(2+) is bound by residues cysteine 143, cysteine 146, cysteine 160, cysteine 163, cysteine 186, cysteine 189, cysteine 200, and cysteine 203. CXXCXGXG motif repeat units follow at residues 143-150 (CHVCNGDG), 160-167 (CEKCHGTG), 186-193 (CDKCHGEG), and 200-207 (CENCKGKG).

Belongs to the DnaJ family. Homodimer. Zn(2+) is required as a cofactor.

The protein resides in the cytoplasm. In terms of biological role, participates actively in the response to hyperosmotic and heat shock by preventing the aggregation of stress-denatured proteins and by disaggregating proteins, also in an autonomous, DnaK-independent fashion. Unfolded proteins bind initially to DnaJ; upon interaction with the DnaJ-bound protein, DnaK hydrolyzes its bound ATP, resulting in the formation of a stable complex. GrpE releases ADP from DnaK; ATP binding to DnaK triggers the release of the substrate protein, thus completing the reaction cycle. Several rounds of ATP-dependent interactions between DnaJ, DnaK and GrpE are required for fully efficient folding. Also involved, together with DnaK and GrpE, in the DNA replication of plasmids through activation of initiation proteins. This Finegoldia magna (strain ATCC 29328 / DSM 20472 / WAL 2508) (Peptostreptococcus magnus) protein is Chaperone protein DnaJ.